The following is a 339-amino-acid chain: Anthranilate phosphoribosyltransferase (339 aa).

Residues G79, 82–83, S87, 89–92, 107–115, and A119 each bind 5-phospho-alpha-D-ribose 1-diphosphate; these read GD, NIST, and KHGNRAASS. Position 79 (G79) interacts with anthranilate. Position 91 (S91) interacts with Mg(2+). N110 contributes to the anthranilate binding site. R165 is an anthranilate binding site. D224 and E225 together coordinate Mg(2+).

It belongs to the anthranilate phosphoribosyltransferase family. In terms of assembly, homodimer. Requires Mg(2+) as cofactor.

It catalyses the reaction N-(5-phospho-beta-D-ribosyl)anthranilate + diphosphate = 5-phospho-alpha-D-ribose 1-diphosphate + anthranilate. It participates in amino-acid biosynthesis; L-tryptophan biosynthesis; L-tryptophan from chorismate: step 2/5. Functionally, catalyzes the transfer of the phosphoribosyl group of 5-phosphorylribose-1-pyrophosphate (PRPP) to anthranilate to yield N-(5'-phosphoribosyl)-anthranilate (PRA). This is Anthranilate phosphoribosyltransferase from Lactiplantibacillus plantarum (strain ATCC BAA-793 / NCIMB 8826 / WCFS1) (Lactobacillus plantarum).